An 829-amino-acid chain; its full sequence is Probable beta-glucosidase H (829 aa).

The N-linked (GlcNAc...) asparagine glycan is linked to Asn-13. Asp-225 is a catalytic residue. 6 N-linked (GlcNAc...) asparagine glycosylation sites follow: Asn-304, Asn-473, Asn-602, Asn-627, Asn-664, and Asn-749. The PA14 domain occupies 389–548 (RMLSNAVIHF…DPEQMVANAV (160 aa)).

This sequence belongs to the glycosyl hydrolase 3 family.

It is found in the secreted. The enzyme catalyses Hydrolysis of terminal, non-reducing beta-D-glucosyl residues with release of beta-D-glucose.. It functions in the pathway glycan metabolism; cellulose degradation. In terms of biological role, beta-glucosidases are one of a number of cellulolytic enzymes involved in the degradation of cellulosic biomass. Catalyzes the last step releasing glucose from the inhibitory cellobiose. The protein is Probable beta-glucosidase H (bglH) of Aspergillus fumigatus (strain CBS 144.89 / FGSC A1163 / CEA10) (Neosartorya fumigata).